The sequence spans 251 residues: Zwei Ig domain protein zig-3 (251 aa).

A signal peptide spans 1–19 (MLLICISVLAAISAHPLSS). 2 Ig-like C2-type domains span residues 42–144 (PSLK…AKIS) and 160–244 (PVIT…TFLY). Cystine bridges form between cysteine 65–cysteine 128 and cysteine 181–cysteine 228.

As to expression, expressed in PVT, AIM and ASI neurons, in vulva and weakly in body wall muscles.

The protein resides in the secreted. Functionally, required for maintaining axon position of PVQ and PVP neurons postembryonically in the ventral nerve cord (VNC) by preventing axons drifting into the opposite side of the VNC that could occur during body growth and movement. In Caenorhabditis elegans, this protein is Zwei Ig domain protein zig-3.